We begin with the raw amino-acid sequence, 100 residues long: Small ribosomal subunit protein uS14 (100 aa).

The Zn(2+) site is built by C63, C66, C79, and C82.

The protein belongs to the universal ribosomal protein uS14 family. In terms of assembly, part of the 30S ribosomal subunit. Contacts proteins S3 and S10. The cofactor is Zn(2+).

In terms of biological role, binds 16S rRNA, required for the assembly of 30S particles and may also be responsible for determining the conformation of the 16S rRNA at the A site. In Legionella pneumophila (strain Paris), this protein is Small ribosomal subunit protein uS14 (rpsN).